The following is a 158-amino-acid chain: U4/U6.U5 small nuclear ribonucleoprotein 27 kDa protein (158 aa).

The segment at 1–102 is disordered; it reads MGRSRSRSPE…AEDLEGKTEE (102 aa). The segment covering 13–59 has biased composition (basic residues); the sequence is RERRRSRSASRERERRRRERSRSRERRRSRSRSPHRRRSRSPRRHRS. A compositionally biased stretch (basic and acidic residues) spans 66–101; it reads RLKDRRDDDKKEPKESKGGGSKERQLAAEDLEGKTE.

This sequence belongs to the SNUT3 family. As to quaternary structure, part of a tri-snRNP complex.

The protein resides in the nucleus. May play a role in mRNA splicing. The polypeptide is U4/U6.U5 small nuclear ribonucleoprotein 27 kDa protein (snrnp27) (Xenopus laevis (African clawed frog)).